We begin with the raw amino-acid sequence, 97 residues long: Protein S100-A10 (97 aa).

N6-acetyllysine occurs at positions 23, 28, 54, and 57. Residues 47-82 form the EF-hand domain; that stretch reads KDPLAVDKIMKDLDQCRDGKVGFQSFLSLVAGLTIA. An ancestral calcium site region spans residues 60–71; the sequence is DQCRDGKVGFQS.

It belongs to the S-100 family. Heterotetramer containing 2 light chains of S100A10/p11 and 2 heavy chains of ANXA2/p36. Interacts with SCN10A. Interacts with TASOR.

Functionally, because S100A10 induces the dimerization of ANXA2/p36, it may function as a regulator of protein phosphorylation in that the ANXA2 monomer is the preferred target (in vitro) of tyrosine-specific kinase. The sequence is that of Protein S100-A10 (S100a10) from Mus musculus (Mouse).